The primary structure comprises 891 residues: Valine--tRNA ligase (891 aa).

Positions 43 to 53 match the 'HIGH' region motif; it reads PFTSGTLHLGH. A 'KMSKS' region motif is present at residues 536–540; it reads KMSKS. Residue K539 coordinates ATP.

The protein belongs to the class-I aminoacyl-tRNA synthetase family. ValS type 2 subfamily.

The protein localises to the cytoplasm. The enzyme catalyses tRNA(Val) + L-valine + ATP = L-valyl-tRNA(Val) + AMP + diphosphate. Its function is as follows. Catalyzes the attachment of valine to tRNA(Val). As ValRS can inadvertently accommodate and process structurally similar amino acids such as threonine, to avoid such errors, it has a 'posttransfer' editing activity that hydrolyzes mischarged Thr-tRNA(Val) in a tRNA-dependent manner. In Pyrococcus furiosus (strain ATCC 43587 / DSM 3638 / JCM 8422 / Vc1), this protein is Valine--tRNA ligase.